The primary structure comprises 308 residues: Porphobilinogen deaminase (308 aa).

Cysteine 240 is modified (S-(dipyrrolylmethanemethyl)cysteine).

The protein belongs to the HMBS family. As to quaternary structure, monomer. The cofactor is dipyrromethane.

It catalyses the reaction 4 porphobilinogen + H2O = hydroxymethylbilane + 4 NH4(+). It participates in porphyrin-containing compound metabolism; protoporphyrin-IX biosynthesis; coproporphyrinogen-III from 5-aminolevulinate: step 2/4. Its function is as follows. Tetrapolymerization of the monopyrrole PBG into the hydroxymethylbilane pre-uroporphyrinogen in several discrete steps. This chain is Porphobilinogen deaminase, found in Laribacter hongkongensis (strain HLHK9).